A 360-amino-acid polypeptide reads, in one-letter code: Protein RecA (360 aa).

65 to 72 (GPESSGKT) is a binding site for ATP.

The protein belongs to the RecA family.

The protein resides in the cytoplasm. Functionally, can catalyze the hydrolysis of ATP in the presence of single-stranded DNA, the ATP-dependent uptake of single-stranded DNA by duplex DNA, and the ATP-dependent hybridization of homologous single-stranded DNAs. It interacts with LexA causing its activation and leading to its autocatalytic cleavage. The chain is Protein RecA from Tolumonas auensis (strain DSM 9187 / NBRC 110442 / TA 4).